The sequence spans 238 residues: Ribose-5-phosphate isomerase A (238 aa).

Substrate contacts are provided by residues 30–33, 87–90, and 100–103; these read SGST, DGAD, and KGGG. Glu-109 (proton acceptor) is an active-site residue. Residue Lys-127 coordinates substrate.

The protein belongs to the ribose 5-phosphate isomerase family. Homodimer.

It carries out the reaction aldehydo-D-ribose 5-phosphate = D-ribulose 5-phosphate. It functions in the pathway carbohydrate degradation; pentose phosphate pathway; D-ribose 5-phosphate from D-ribulose 5-phosphate (non-oxidative stage): step 1/1. Its function is as follows. Catalyzes the reversible conversion of ribose-5-phosphate to ribulose 5-phosphate. This chain is Ribose-5-phosphate isomerase A, found in Synechococcus sp. (strain CC9311).